The sequence spans 699 residues: SPS-sensor serine protease component SSY5 (699 aa).

Disordered regions lie at residues 1–113 (MVRF…LQGF) and 129–158 (VKEEESQDTQNTLDVSSSTSSTLATSGNAR). Residues 1–381 (MVRFFGLNKE…YCVKDYIKKA (381 aa)) constitute a propeptide that is removed on maturation. Residues 8-18 (NKEKNEEKENT) show a composition bias toward basic and acidic residues. Polar residues predominate over residues 24-38 (NEQNAAETSSSNVSG). Basic and acidic residues predominate over residues 39–51 (NEERIDPNSRDTN). Positions 61–78 (STTFGSSIQSSSIFSRGR) are enriched in low complexity. Residues 83–93 (TGASSSMATSE) are compositionally biased toward polar residues. The span at 144–154 (SSSTSSTLATS) shows a compositional bias: low complexity. Residues 459-699 (FAITCAHVVL…QWDIDPQLDG (241 aa)) are serine protease. Catalysis depends on charge relay system residues His-465, Asp-545, and Ser-640.

Belongs to the peptidase S64 family. As to quaternary structure, component of the plasma membrane SPS (SSY1-PTR3-SSY5) amino acid sensor complex. The propeptide is autoproteolytically cleaved from the catalytic domain but remains associated, forming an inactive protease complex. This processing occurs even in the absence of signaling.

It is found in the cell membrane. Protease component of the SPS-sensor system, which regulates the expression of several amino acid-metabolizing enzymes and amino acid- and peptide-permeases in response to extracellular amino acid levels by controlling the activity of two transcription factors, STP1 and STP2. Catalyzes the activation of these transcription factors, which are synthesized as latent cytoplasmic precursors, by proteolytic removal of an N-terminal inhibitory domain containing cytoplasmic retention motifs. SSY5 binds as an inactive protease complex to STP1. In response to extracellular amino acids and dependent on the other SPS-sensor components, the inhibitory propeptide is induced to dissociate, and thereby enables the catalytic domain to process STP1. The sequence is that of SPS-sensor serine protease component SSY5 (SSY5) from Saccharomyces cerevisiae (strain AWRI1631) (Baker's yeast).